The primary structure comprises 131 residues: Probable ATP synthase subunit g 2, mitochondrial (131 aa).

Belongs to the ATPase g subunit family. As to quaternary structure, subunit of the F-type ATPase which has 2 components, CF(1) - the catalytic core - and CF(0) - the membrane proton channel.

It localises to the mitochondrion membrane. Functionally, mitochondrial membrane ATP synthase (F(1)F(0) ATP synthase or Complex V) produces ATP from ADP in the presence of a proton gradient across the membrane which is generated by electron transport complexes of the respiratory chain. F-type ATPases consist of two structural domains, F(1) - containing the extramembraneous catalytic core, and F(0) - containing the membrane proton channel, linked together by a central stalk and a peripheral stalk. During catalysis, ATP synthesis in the catalytic domain of F(1) is coupled via a rotary mechanism of the central stalk subunits to proton translocation. Part of the complex F(0) domain. Minor subunit located with subunit a in the membrane. The chain is Probable ATP synthase subunit g 2, mitochondrial from Caenorhabditis elegans.